Reading from the N-terminus, the 277-residue chain is Insulin-induced gene 1 protein (277 aa).

Residues 1–84 (MPRLHDHFWS…PYPNTWHHRL (84 aa)) are Cytoplasmic-facing. Residues 51 to 66 (HGAPDADPAPRGRSAA) are compositionally biased toward low complexity. The disordered stretch occupies residues 51–73 (HGAPDADPAPRGRSAAMSGPEPG). The helical transmembrane segment at 85–107 (LQRSLVLFSVGVVLALVLNLLQI) threads the bilayer. The Lumenal portion of the chain corresponds to 108–126 (QRNVTLFPEEVIATIFSSA). The helical transmembrane segment at 127–144 (WWVPPCCGTAAAVVGLLY) threads the bilayer. The Cytoplasmic segment spans residues 145-159 (PCIDSHLGEPHKFKR). Glycyl lysine isopeptide (Lys-Gly) (interchain with G-Cter in ubiquitin) cross-links involve residues Lys156 and Lys158. Residues 160-182 (EWASVMRCIAVFVGINHASAKLD) traverse the membrane as a helical segment. Residues 183–185 (FAN) are Lumenal-facing. The helical transmembrane segment at 186-204 (NVQLSLTLAALSLGLWWTF) threads the bilayer. The Cytoplasmic portion of the chain corresponds to 205–209 (DRSRS). The residue at position 207 (Ser207) is a Phosphoserine; by PCK1. The helical transmembrane segment at 210 to 231 (GLGLGITIAFLATLITQFLVYN) threads the bilayer. Residues 232–245 (GVYQYTSPDFLYIR) are Lumenal-facing. The helical transmembrane segment at 246–263 (SWLPCIFFSGGVTVGNIG) threads the bilayer. Topologically, residues 264 to 277 (RQLAMGVPEKPHSD) are cytoplasmic. Residues 271–277 (PEKPHSD) carry the KxHxx motif.

This sequence belongs to the INSIG family. In terms of assembly, interacts with SCAP; interaction is direct and only takes place in the presence of sterols; it prevents interaction between SCAP and the coat protein complex II (COPII). Associates with the SCAP-SREBP complex (composed of SCAP and SREBF1/SREBP1 or SREBF2/SREBP2); association is mediated via its interaction with SCAP and only takes place in the presence of sterols. Interaction with SCAP is mutually exclusive with PAQR3. Interacts with HMGCR (via its SSD); the interaction, accelerated by sterols, leads to the recruitment of HMGCR to AMFR/gp78 for its ubiquitination by the sterol-mediated ERAD pathway. Interacts with AMFR/gp78 (via its membrane domain); the interaction recruits HMCR at the ER membrane for its ubiquitination and degradation by the sterol-mediated ERAD pathway. Interacts with SOAT2/ACAT2; leading to promote recruitment of AMFR/gp78 and subsequent ubiquitination of SOAT2/ACAT2. Interacts with RNF139. Interacts with RNF145. In terms of processing, phosphorylation at Ser-207 by PCK1 reduces binding to oxysterol, disrupting the interaction between INSIG1 and SCAP, thereby promoting nuclear translocation of SREBP proteins (SREBF1/SREBP1 or SREBF2/SREBP2) and subsequent transcription of downstream lipogenesis-related genes. Post-translationally, ubiquitinated by AMFR/gp78 in response to sterol deprivation, leading to its degradation: when the SCAP-SREBP complex becomes dissociated from INSIG1, INSIG1 is then ubiquitinated and degraded in proteasomes. Although ubiquitination is required for rapid INSIG1 degradation, it is not required for release of the SCAP-SREBP complex. Ubiquitinated by RNF139. As to expression, expressed in all tissues tested with highest expression in the liver.

It is found in the endoplasmic reticulum membrane. In terms of biological role, oxysterol-binding protein that mediates feedback control of cholesterol synthesis by controlling both endoplasmic reticulum to Golgi transport of SCAP and degradation of HMGCR. Acts as a negative regulator of cholesterol biosynthesis by mediating the retention of the SCAP-SREBP complex in the endoplasmic reticulum, thereby blocking the processing of sterol regulatory element-binding proteins (SREBPs) SREBF1/SREBP1 and SREBF2/SREBP2. Binds oxysterol, including 25-hydroxycholesterol, regulating interaction with SCAP and retention of the SCAP-SREBP complex in the endoplasmic reticulum. In presence of oxysterol, interacts with SCAP, retaining the SCAP-SREBP complex in the endoplasmic reticulum, thereby preventing SCAP from escorting SREBF1/SREBP1 and SREBF2/SREBP2 to the Golgi. Sterol deprivation or phosphorylation by PCK1 reduce oxysterol-binding, disrupting the interaction between INSIG1 and SCAP, thereby promoting Golgi transport of the SCAP-SREBP complex, followed by processing and nuclear translocation of SREBF1/SREBP1 and SREBF2/SREBP2. Also regulates cholesterol synthesis by regulating degradation of HMGCR: initiates the sterol-mediated ubiquitin-mediated endoplasmic reticulum-associated degradation (ERAD) of HMGCR via recruitment of the reductase to the ubiquitin ligases AMFR/gp78 and/or RNF139. Also regulates degradation of SOAT2/ACAT2 when the lipid levels are low: initiates the ubiquitin-mediated degradation of SOAT2/ACAT2 via recruitment of the ubiquitin ligases AMFR/gp78. This Homo sapiens (Human) protein is Insulin-induced gene 1 protein.